Consider the following 1892-residue polypeptide: Kinesin-like protein KIN-12E (1892 aa).

The segment at 1–28 (MAGHGAGGRRASTSRAAARRVEAETNEN) is disordered. Positions 64–401 (NVQVLIRIRP…LKFAQRAKLI (338 aa)) constitute a Kinesin motor domain. 145 to 152 (GQTGSGKT) contributes to the ATP binding site. Coiled-coil stretches lie at residues 406 to 438 (KVNE…QQNM), 486 to 526 (SLRR…TTVK), 1066 to 1139 (LFSN…LHEQ), 1303 to 1357 (KLLQ…LAEN), and 1396 to 1528 (ISET…SYQI). Positions 1633–1649 (LHESNSDTGHTKFEKPS) are enriched in basic and acidic residues. Residues 1633-1656 (LHESNSDTGHTKFEKPSGRTRGSG) are disordered. The stretch at 1780 to 1841 (MDQRKADLLE…LVGSNQAIAE (62 aa)) forms a coiled coil. A disordered region spans residues 1870 to 1892 (HARHEHSRLQAAKSSRTRRGSHQ).

This sequence belongs to the TRAFAC class myosin-kinesin ATPase superfamily. Kinesin family. KIN-12 subfamily.

The protein is Kinesin-like protein KIN-12E of Oryza sativa subsp. japonica (Rice).